The primary structure comprises 198 residues: Probable GTP-binding protein EngB (198 aa).

The EngB-type G domain occupies 36–198 (SDPQFAFIGR…NLSKLQELLE (163 aa)). Residues 44-51 (GRSNVGKS), 70-74 (GRTQL), 88-91 (DLPG), 155-158 (NKID), and 182-184 (ISA) each bind GTP. 2 residues coordinate Mg(2+): Ser51 and Thr72.

The protein belongs to the TRAFAC class TrmE-Era-EngA-EngB-Septin-like GTPase superfamily. EngB GTPase family. It depends on Mg(2+) as a cofactor.

Its function is as follows. Necessary for normal cell division and for the maintenance of normal septation. This Mesomycoplasma hyopneumoniae (strain 7448) (Mycoplasma hyopneumoniae) protein is Probable GTP-binding protein EngB.